A 555-amino-acid polypeptide reads, in one-letter code: Polypyrimidine tract-binding protein 1 (555 aa).

Methionine 1 carries the post-translational modification N-acetylmethionine. Serine 16 carries the phosphoserine modification. RRM domains follow at residues 58–142 (RVIH…SSPN), 183–259 (LRII…FSKL), and 361–412 (SVLL…SQAQ). Residue lysine 64 forms a Glycyl lysine isopeptide (Lys-Gly) (interchain with G-Cter in SUMO2) linkage. Tyrosine 126 is modified (phosphotyrosine). Phosphothreonine is present on threonine 137. Serine 140 bears the Phosphoserine mark. Residue lysine 217 forms a Glycyl lysine isopeptide (Lys-Gly) (interchain with G-Cter in SUMO2) linkage. Residues 435-457 (HQSVQLPREGQEDQGLTKDYGSS) form a disordered region. Residue serine 457 is modified to Phosphoserine. The RRM 4 domain maps to 478–553 (ATLHLSNIPP…HHLRVSFSKS (76 aa)).

Monomer. Part of a ternary complex containing KHSRP, PTBP1, PTBP2 and HNRPH1. Interacts with SFPQ. Interacts with RAVER1. Interacts with IVNS1ABP (via BACK domain); the interaction is direct. Expressed in myoblast; expression gradually decreases during muscle cell differentiation (at protein level).

It localises to the nucleus. Its function is as follows. Plays a role in pre-mRNA splicing and in the regulation of alternative splicing events. Activates exon skipping of its own pre-mRNA during muscle cell differentiation. Binds to the polypyrimidine tract of introns. May promote RNA looping when bound to two separate polypyrimidine tracts in the same pre-mRNA. May promote the binding of U2 snRNP to pre-mRNA. Cooperates with RAVER1 to modulate switching between mutually exclusive exons during maturation of the TPM1 pre-mRNA. Represses the splicing of MAPT/Tau exon 10. Binds to polypyrimidine-rich controlling element (PCE) of CFTR and promotes exon skipping of CFTR exon 9, thereby antagonizing TIA1 and its role in exon inclusion of CFTR exon 9. Plays a role in the splicing of pyruvate kinase PKM by binding repressively to a polypyrimidine tract flanking PKM exon 9, inhibiting exon 9 inclusion and resulting in exon 10 inclusion and production of the PKM M2 isoform. The protein is Polypyrimidine tract-binding protein 1 (Ptbp1) of Mus musculus (Mouse).